The chain runs to 629 residues: Coiled-coil domain-containing protein 93 (629 aa).

The segment at 1–23 (MGLPKGPEGQGLPEVETREDEEQ) is disordered. Positions 1-428 (MGLPKGPEGQ…ETLKAERAPG (428 aa)) are sufficient for interaction with CCDC22. Coiled-coil stretches lie at residues 231–430 (LSAA…PGEK) and 558–599 (LRQM…LLEK). A phosphoserine mark is found at serine 298, serine 301, and serine 305. A sufficient for interaction with WASHC2C region spans residues 446–629 (THNEDLDRRY…LLSKIKAKAS (184 aa)).

It belongs to the CCDC93 family. In terms of assembly, component of the commander complex consisting of the CCC subcomplex and the retriever subcomplex. Component of the CCC (COMMD/CCDC22/CCDC93) subcomplex consisting of COMMD1, COMMD2, COMMD3, COMMD4, COMMD5, COMMD6, COMMD7, COMMD8, COMMD9, COMMD10, CCDC22 and CCDC93. Forms a coiled-coil heterodimer with CCDC22; this heterodimer interacts with the guanine nucleotide exchange factor DENND10; the interaction is direct. Interacts with WASHC1. Interacts directly with WASHC2C. Interacts with SNX17 and SNX31.

The protein localises to the early endosome. In terms of biological role, component of the commander complex that is essential for endosomal recycling of transmembrane cargos; the commander complex is composed of composed of the CCC subcomplex and the retriever subcomplex. Component of the CCC complex, which is involved in the regulation of endosomal recycling of surface proteins, including integrins, signaling receptor and channels. The CCC complex associates with SNX17, retriever and WASH complexes to prevent lysosomal degradation and promote cell surface recycling of numerous cargos such as integrins ITGA5:ITGB1. Involved in copper-dependent ATP7A trafficking between the trans-Golgi network and vesicles in the cell periphery; the function is proposed to depend on its association within the CCC complex and cooperation with the WASH complex on early endosomes and is dependent on its interaction with WASHC2C. The polypeptide is Coiled-coil domain-containing protein 93 (Ccdc93) (Mus musculus (Mouse)).